Here is a 1189-residue protein sequence, read N- to C-terminus: Zinc finger CCCH domain-containing protein 6 (1189 aa).

Basic and acidic residues predominate over residues 1–12; sequence MTDSEHAGHDRE. Positions 1–105 are disordered; that stretch reads MTDSEHAGHD…HKKRTGFYRD (105 aa). Residues 13–28 show a composition bias toward acidic residues; the sequence is DGELEDGEIDDAGFEE. A coiled-coil region spans residues 27–73; sequence EEIQEKEAKENEKQKSEKAYRKSRKKHKKEREKKKSKRRKREKHKHN. Residues 29–46 show a composition bias toward basic and acidic residues; it reads IQEKEAKENEKQKSEKAY. Basic residues predominate over residues 47-73; that stretch reads RKSRKKHKKEREKKKSKRRKREKHKHN. 3 consecutive C3H1-type zinc fingers follow at residues 273–299, 301–328, and 329–352; these read KGKQ…HDAE, EKRK…HNEF, and PCKF…HDDL. A coiled-coil region spans residues 353 to 385; it reads TKETKKLLDKVLNTDEELINEDERELEELRKRG. 5 disordered regions span residues 451 to 530, 630 to 659, 676 to 755, 947 to 1026, and 1051 to 1189; these read FYTS…GPQN, PPVV…PVPG, YQED…GNQV, LEQF…PYAP, and PRDH…SPFC. Positions 461–478 are enriched in low complexity; it reads QFQGSSPHPQHIYSSGSS. The segment covering 505 to 525 has biased composition (pro residues); that stretch reads AGPPGLPVPQSPPLPPGPPEI. Positions 639–659 are enriched in low complexity; it reads HGSGSDGSSTRTGHGPLPVPG. Residues 718-741 show a composition bias toward polar residues; that stretch reads KTLQKQTETLRNQQQPSTELSTPT. Over residues 961–973 the composition is skewed to basic and acidic residues; it reads GDPRLQKNFDPRL. 2 stretches are compositionally biased toward low complexity: residues 1009–1020 and 1056–1069; these read SGAGTSNSGSGA and SSST…SSGE. Serine 1158 carries the phosphoserine modification. Positions 1164-1179 are enriched in basic and acidic residues; the sequence is DPGRETDDKSLKEVFK.

The chain is Zinc finger CCCH domain-containing protein 6 (ZC3H6) from Homo sapiens (Human).